A 466-amino-acid chain; its full sequence is UDP-N-acetylmuramoylalanine--D-glutamate ligase (466 aa).

Gly122–Thr128 lines the ATP pocket.

This sequence belongs to the MurCDEF family.

The protein localises to the cytoplasm. The enzyme catalyses UDP-N-acetyl-alpha-D-muramoyl-L-alanine + D-glutamate + ATP = UDP-N-acetyl-alpha-D-muramoyl-L-alanyl-D-glutamate + ADP + phosphate + H(+). The protein operates within cell wall biogenesis; peptidoglycan biosynthesis. Its function is as follows. Cell wall formation. Catalyzes the addition of glutamate to the nucleotide precursor UDP-N-acetylmuramoyl-L-alanine (UMA). In Aromatoleum aromaticum (strain DSM 19018 / LMG 30748 / EbN1) (Azoarcus sp. (strain EbN1)), this protein is UDP-N-acetylmuramoylalanine--D-glutamate ligase.